A 479-amino-acid chain; its full sequence is Flap endonuclease 1 (479 aa).

The tract at residues 1 to 106 (MGIKGLTKFI…SELEKRGEKR (106 aa)) is N-domain. Position 34 (Asp34) interacts with Mg(2+). Positions 47 and 72 each coordinate DNA. Residues Asp88, Glu160, Glu162, Asp181, and Asp183 each contribute to the Mg(2+) site. The I-domain stretch occupies residues 124-266 (EIKKQSGRTV…KTAYNLIKEY (143 aa)). Glu160 lines the DNA pocket. Residues Gly244 and Asp246 each coordinate DNA. Residue Asp246 participates in Mg(2+) binding. Residues 349 to 357 (TQRRLDTFF) are interaction with PCNA. The disordered stretch occupies residues 379-455 (AKGKGKKREL…NSDSGNIKNE (77 aa)). Over residues 403 to 428 (NIKDEKKNTDKMDELKNKSDENFVKD) the composition is skewed to basic and acidic residues.

It belongs to the XPG/RAD2 endonuclease family. FEN1 subfamily. Interacts with PCNA. Three molecules of FEN1 bind to one PCNA trimer with each molecule binding to one PCNA monomer. PCNA stimulates the nuclease activity without altering cleavage specificity. It depends on Mg(2+) as a cofactor. Phosphorylated. Phosphorylation upon DNA damage induces relocalization to the nuclear plasma.

It is found in the nucleus. Its subcellular location is the nucleolus. The protein resides in the nucleoplasm. It localises to the mitochondrion. Functionally, structure-specific nuclease with 5'-flap endonuclease and 5'-3' exonuclease activities involved in DNA replication and repair. During DNA replication, cleaves the 5'-overhanging flap structure that is generated by displacement synthesis when DNA polymerase encounters the 5'-end of a downstream Okazaki fragment. It enters the flap from the 5'-end and then tracks to cleave the flap base, leaving a nick for ligation. Also involved in the long patch base excision repair (LP-BER) pathway, by cleaving within the apurinic/apyrimidinic (AP) site-terminated flap. Acts as a genome stabilization factor that prevents flaps from equilibrating into structures that lead to duplications and deletions. Also possesses 5'-3' exonuclease activity on nicked or gapped double-stranded DNA, and exhibits RNase H activity. Also involved in replication and repair of rDNA and in repairing mitochondrial DNA. The polypeptide is Flap endonuclease 1 (Plasmodium chabaudi chabaudi).